We begin with the raw amino-acid sequence, 741 residues long: Translation initiation factor IF-2 (741 aa).

Composition is skewed to basic and acidic residues over residues His-48–Lys-74 and Lys-107–Ala-123. A disordered region spans residues His-48–Leu-158. Over residues Ala-127–Lys-139 the composition is skewed to basic residues. A compositionally biased stretch (low complexity) spans Gln-140–Pro-151. In terms of domain architecture, tr-type G spans Glu-242–Lys-411. A G1 region spans residues Gly-251–Thr-258. Gly-251–Thr-258 lines the GTP pocket. The interval Gly-276–His-280 is G2. The interval Asp-297–Gly-300 is G3. GTP-binding positions include Asp-297 to His-301 and Asn-351 to Asp-354. The tract at residues Asn-351 to Asp-354 is G4. Residues Ser-387–Lys-389 are G5.

The protein belongs to the TRAFAC class translation factor GTPase superfamily. Classic translation factor GTPase family. IF-2 subfamily.

Its subcellular location is the cytoplasm. Functionally, one of the essential components for the initiation of protein synthesis. Protects formylmethionyl-tRNA from spontaneous hydrolysis and promotes its binding to the 30S ribosomal subunits. Also involved in the hydrolysis of GTP during the formation of the 70S ribosomal complex. The sequence is that of Translation initiation factor IF-2 (infB) from Geobacillus stearothermophilus (Bacillus stearothermophilus).